Consider the following 454-residue polypeptide: MNKCAIILAAGQGTRIKSKLPKVLHKACGKEMVNHVIDAMRNAEIDDVNVIIGKGAELVKERTTSKNVSYSLQAEQLGTGHAVKCAKDFLEGKTGVVAIFTGDAPLIKAETVKNLVDTHINEKNSATLLTSVIENPTGYGRIVRNGESVEKIVEHKDCNEQEIKIQEVNAGMYCFDIESLLTSLEQLSNDNAQGEYYLTDVIEILKKDNKKVGAMITDFEETLGVNSRAELAKVESIMRNRINRTHLDNGVTIIDPLNTYIEPEVVIGKDTIIYPGNVIEGKTVIGEDCILYPNSRINNSTIGNGVEIQSSVILDSKIGDETTVGPFAYVRPESNIGEHVRIGDFVEIKKSTIGNNTKVSHLTYIGDAEVGERCNFGCGTVVVNYDGKKKHKTIIGDDSFIGCNTNLVSPVEVKDNTYIAAGSTITKEVPEGSLAIARAKQQNIEGWVERKKLK.

Positions 1-228 (MNKCAIILAA…FEETLGVNSR (228 aa)) are pyrophosphorylase. Residues 8 to 11 (LAAG), K22, Q73, and 78 to 79 (GT) each bind UDP-N-acetyl-alpha-D-glucosamine. Mg(2+) is bound at residue D103. UDP-N-acetyl-alpha-D-glucosamine-binding residues include G140, E154, N169, and N226. A Mg(2+)-binding site is contributed by N226. The interval 229-249 (AELAKVESIMRNRINRTHLDN) is linker. An N-acetyltransferase region spans residues 250–454 (GVTIIDPLNT…EGWVERKKLK (205 aa)). Residues R331 and K349 each contribute to the UDP-N-acetyl-alpha-D-glucosamine site. H361 serves as the catalytic Proton acceptor. Residues Y364 and N375 each contribute to the UDP-N-acetyl-alpha-D-glucosamine site. Acetyl-CoA-binding positions include 384–385 (NY), A421, and R438.

It in the N-terminal section; belongs to the N-acetylglucosamine-1-phosphate uridyltransferase family. The protein in the C-terminal section; belongs to the transferase hexapeptide repeat family. As to quaternary structure, homotrimer. The cofactor is Mg(2+).

The protein resides in the cytoplasm. The enzyme catalyses alpha-D-glucosamine 1-phosphate + acetyl-CoA = N-acetyl-alpha-D-glucosamine 1-phosphate + CoA + H(+). The catalysed reaction is N-acetyl-alpha-D-glucosamine 1-phosphate + UTP + H(+) = UDP-N-acetyl-alpha-D-glucosamine + diphosphate. Its pathway is nucleotide-sugar biosynthesis; UDP-N-acetyl-alpha-D-glucosamine biosynthesis; N-acetyl-alpha-D-glucosamine 1-phosphate from alpha-D-glucosamine 6-phosphate (route II): step 2/2. The protein operates within nucleotide-sugar biosynthesis; UDP-N-acetyl-alpha-D-glucosamine biosynthesis; UDP-N-acetyl-alpha-D-glucosamine from N-acetyl-alpha-D-glucosamine 1-phosphate: step 1/1. It participates in bacterial outer membrane biogenesis; LPS lipid A biosynthesis. Functionally, catalyzes the last two sequential reactions in the de novo biosynthetic pathway for UDP-N-acetylglucosamine (UDP-GlcNAc). The C-terminal domain catalyzes the transfer of acetyl group from acetyl coenzyme A to glucosamine-1-phosphate (GlcN-1-P) to produce N-acetylglucosamine-1-phosphate (GlcNAc-1-P), which is converted into UDP-GlcNAc by the transfer of uridine 5-monophosphate (from uridine 5-triphosphate), a reaction catalyzed by the N-terminal domain. In Clostridium perfringens (strain SM101 / Type A), this protein is Bifunctional protein GlmU.